The sequence spans 224 residues: LOB domain-containing protein 15 (224 aa).

The LOB domain occupies 44-145 (TPCAACKLLR…AELTAVRSEI (102 aa)). A disordered region spans residues 171-224 (SGGVSVIAPPPQRPTTPPQPTTAHPPSPSSCVFSQPTTRDLEYGNIESENNYFG). Positions 178–198 (APPPQRPTTPPQPTTAHPPSP) are enriched in pro residues.

Belongs to the LOB domain-containing protein family. In terms of tissue distribution, expressed in young shoots, roots, stems, leaves and flowers.

In Arabidopsis thaliana (Mouse-ear cress), this protein is LOB domain-containing protein 15 (LBD15).